The primary structure comprises 87 residues: U3-theraphotoxin-Hhn1d (87 aa).

Residues Met1–Ala24 form the signal peptide. Residues Ser25–Arg52 constitute a propeptide that is removed on maturation. 3 disulfide bridges follow: Cys54–Cys67, Cys61–Cys72, and Cys66–Cys79.

The protein belongs to the neurotoxin 10 (Hwtx-1) family. 51 (Hntx-8) subfamily. Hntx-8 sub-subfamily. In terms of tissue distribution, expressed by the venom gland.

It is found in the secreted. In terms of biological role, ion channel inhibitor. This chain is U3-theraphotoxin-Hhn1d, found in Cyriopagopus hainanus (Chinese bird spider).